The chain runs to 377 residues: MGLQSAAAHFINRFIIWITIFMVACFLLRLLVVLDLNKRVYNHTPGPCRVLTDNYKGTAGMTYVESQKRVYITLGYGRAHDLKTKTGIAFYKTNRTDGRSQQEMYDLIEMTINWNGYEYKKEFIPTGIDSYSSSNGRVLLYVINAHPNHQCIHFFQIVESSKLNHRKAICDPSFSSLQDIAVVGPDRLFVTNMAAFGRGWAQILEFSLQTGQGAVYYYDGSKLSTAASSLIAPTGIGYDAKRRILYVGSMIRESIFAYKVAKDTTLELLYEMMLLTSPIGVFVESKTGDIWIAAHPVIHESAWHYTHPENQNIHSPSQILRIRIQEEGNSWVTTEPYANDGATISASSSVVFTDEQMLIGSSFGRLLHCDLTHSYIT.

Topologically, residues Met1 to Arg13 are cytoplasmic. Residues Phe14–Leu34 traverse the membrane as a helical segment. Topologically, residues Asp35–Thr377 are extracellular. Cysteines 48 and 369 form a disulfide. Residue Asn94 is glycosylated (N-linked (GlcNAc...) asparagine).

This sequence belongs to the paraoxonase family. Component of a non-voltage-gated amiloride-sensitive cation channel complex (also called the degenerin channel complex) composed of at least the mec-2, mec-4, mec-6 and mec-10 subunits; the complex mediates mechanotransduction in touch cells. Interacts with mec-2, mec-4 and mec-10. Glycosylated. Expressed in neurons including the six touch receptors, ventral cord motor neurons, HSN, PVD, PVC, IL1, and several neurons near the nerve ring, in the anal ganglion and in the male tail sensory rays, in muscles including the body wall, vulval, intestinal, anal depressor and sphincter muscles, and in the excretory canal.

The protein resides in the cell membrane. It localises to the cell projection. The protein localises to the axon. Its function is as follows. Subunit of an amiloride-sensitive cation channel (degenerin channel complex) permeable for sodium, potassium, lithium and N-methylglucamine, and required for mechanosensory transduction (touch sensitivity). Interacts with degenerin channel proteins and stabilizes the channel. Plays a role in mechanosensory transduction (touch sensitivity). The polypeptide is Mechanosensory abnormality protein 6 (Caenorhabditis elegans).